Reading from the N-terminus, the 211-residue chain is MRDFRLYAITGEEFHPDRSLQAVMEEAILGGVDIIQLRDKKSHKREVLEKARVLQALAKKYDIPLIINDHIDVALAVDADGIHLGQDDLPLSEARKIMGRDKIIGISTHKIEEAREAEKGGADYIGVGPIFETKSKEDVVDPVTTAYIQQVAHEISIPFVAIGGIKLHNVEQVLDAGATRICMISEIVGAEDVKGTCEVFSTILEQRGIGS.

4-amino-2-methyl-5-(diphosphooxymethyl)pyrimidine-binding positions include Q36 to K40 and N68. Mg(2+)-binding residues include D69 and D88. S107 contacts 4-amino-2-methyl-5-(diphosphooxymethyl)pyrimidine. T133 to S135 provides a ligand contact to 2-[(2R,5Z)-2-carboxy-4-methylthiazol-5(2H)-ylidene]ethyl phosphate. K136 is a 4-amino-2-methyl-5-(diphosphooxymethyl)pyrimidine binding site. 2-[(2R,5Z)-2-carboxy-4-methylthiazol-5(2H)-ylidene]ethyl phosphate contacts are provided by residues G164 and I184–S185.

The protein belongs to the thiamine-phosphate synthase family. The cofactor is Mg(2+).

It catalyses the reaction 2-[(2R,5Z)-2-carboxy-4-methylthiazol-5(2H)-ylidene]ethyl phosphate + 4-amino-2-methyl-5-(diphosphooxymethyl)pyrimidine + 2 H(+) = thiamine phosphate + CO2 + diphosphate. The enzyme catalyses 2-(2-carboxy-4-methylthiazol-5-yl)ethyl phosphate + 4-amino-2-methyl-5-(diphosphooxymethyl)pyrimidine + 2 H(+) = thiamine phosphate + CO2 + diphosphate. The catalysed reaction is 4-methyl-5-(2-phosphooxyethyl)-thiazole + 4-amino-2-methyl-5-(diphosphooxymethyl)pyrimidine + H(+) = thiamine phosphate + diphosphate. The protein operates within cofactor biosynthesis; thiamine diphosphate biosynthesis; thiamine phosphate from 4-amino-2-methyl-5-diphosphomethylpyrimidine and 4-methyl-5-(2-phosphoethyl)-thiazole: step 1/1. Condenses 4-methyl-5-(beta-hydroxyethyl)thiazole monophosphate (THZ-P) and 2-methyl-4-amino-5-hydroxymethyl pyrimidine pyrophosphate (HMP-PP) to form thiamine monophosphate (TMP). This Halalkalibacterium halodurans (strain ATCC BAA-125 / DSM 18197 / FERM 7344 / JCM 9153 / C-125) (Bacillus halodurans) protein is Thiamine-phosphate synthase.